The primary structure comprises 1152 residues: Autotransporter adhesin BpaC (1152 aa).

Positions 1-71 (MNRIFKSIWC…PFAEEAMAAN (71 aa)) are cleaved as a signal peptide. Positions 72 to 1061 (NAGVCLTYNG…VGQLNSAVSG (990 aa)) are surface exposed passenger domain. Disordered stretches follow at residues 420-886 (GLQG…AGAT) and 900-949 (TATG…ESAA). The segment covering 427–442 (ANTGTASGDNSTASGD) has biased composition (polar residues). Residues 443-504 (NATASGTNST…ANGTNSTASG (62 aa)) show a composition bias toward low complexity. Residues 505-519 (DNSTASGTNASATGE) are compositionally biased toward polar residues. A compositionally biased stretch (low complexity) spans 520-588 (NSTATGTDST…ANGTNSTASG (69 aa)). Over residues 589–603 (DNSTASGTNASATGE) the composition is skewed to polar residues. Residues 604 to 630 (NSTATGTDSTASGSNSTANGTNSTASG) are compositionally biased toward low complexity. The span at 631–645 (DNSTASGTNASATGE) shows a compositional bias: polar residues. Residues 646 to 672 (NSTATGTDSTASGSNSTANGTNSTASG) are compositionally biased toward low complexity. Residues 673-687 (DNSTASGTNASATGE) show a composition bias toward polar residues. A compositionally biased stretch (low complexity) spans 688–714 (NSTATGTDSTASGSNSTANGTNSTASG). Residues 715–729 (DNSTASGTNASATGE) are compositionally biased toward polar residues. Low complexity predominate over residues 730–756 (NSTATGTDSTASGSNSTANGANSTASG). Residues 757-771 (DNSTASGTNASATGE) show a composition bias toward polar residues. 2 stretches are compositionally biased toward low complexity: residues 772 to 840 (NSTA…TASG) and 848 to 886 (TNAS…AGAT). The outer membrane translocation of the passenger domain stretch occupies residues 1062-1099 (IRNQMDGMQGQIDTLARDAYSGIAAATALTMIPDVDPG). The tract at residues 1100-1152 (KTLAVGIGTANFKGYQASALGATARITQNLKVKTGVSYSGSNYVWGAGMSYQW) is translocator domain.

It belongs to the autotransporter-2 (AT-2) (TC 1.B.40) family. As to quaternary structure, homotrimer.

It is found in the cell surface. Its subcellular location is the cell outer membrane. Its function is as follows. Involved in virulence. Mediates adherence to human respiratory epithelial cells. This Burkholderia pseudomallei (strain 1026b) protein is Autotransporter adhesin BpaC.